The following is a 156-amino-acid chain: 6,7-dimethyl-8-ribityllumazine synthase (156 aa).

Residues Phe-22, 57-59 (AVE), and 81-83 (SVI) each bind 5-amino-6-(D-ribitylamino)uracil. 86–87 (GT) is a binding site for (2S)-2-hydroxy-3-oxobutyl phosphate. His-89 serves as the catalytic Proton donor. Position 114 (Phe-114) interacts with 5-amino-6-(D-ribitylamino)uracil. Arg-128 lines the (2S)-2-hydroxy-3-oxobutyl phosphate pocket.

This sequence belongs to the DMRL synthase family. Forms an icosahedral capsid composed of 60 subunits, arranged as a dodecamer of pentamers.

The catalysed reaction is (2S)-2-hydroxy-3-oxobutyl phosphate + 5-amino-6-(D-ribitylamino)uracil = 6,7-dimethyl-8-(1-D-ribityl)lumazine + phosphate + 2 H2O + H(+). The protein operates within cofactor biosynthesis; riboflavin biosynthesis; riboflavin from 2-hydroxy-3-oxobutyl phosphate and 5-amino-6-(D-ribitylamino)uracil: step 1/2. Functionally, catalyzes the formation of 6,7-dimethyl-8-ribityllumazine by condensation of 5-amino-6-(D-ribitylamino)uracil with 3,4-dihydroxy-2-butanone 4-phosphate. This is the penultimate step in the biosynthesis of riboflavin. This chain is 6,7-dimethyl-8-ribityllumazine synthase, found in Aliivibrio salmonicida (strain LFI1238) (Vibrio salmonicida (strain LFI1238)).